We begin with the raw amino-acid sequence, 387 residues long: Polyadenylate-binding protein RBP45A (387 aa).

3 RRM domains span residues 60–140 (KSLW…WAQA), 154–233 (HTIF…PAAN), and 260–332 (TTIF…WGRS). The segment covering 329 to 342 (WGRSPNKQSDQAQW) has biased composition (polar residues). Residues 329-387 (WGRSPNKQSDQAQWNGGGYYGYPPQPQGGYGYAAQPPTQDPNAYYGGYTGYGNYQQQRQ) form a disordered region.

Belongs to the polyadenylate-binding RBP45 family. As to quaternary structure, interacts with the poly(A) tail of mRNA in nucleus. Mostly expressed in seedlings, and, to a lower extent, in leaves, stems, and flowers. Present in immature anther tissues (tapetum cells) and mature pollen grains.

It localises to the nucleus. In terms of biological role, heterogeneous nuclear ribonucleoprotein (hnRNP)-protein binding the poly(A) tail of mRNA and probably involved in some steps of pre-mRNA maturation. The protein is Polyadenylate-binding protein RBP45A (RBP45A) of Arabidopsis thaliana (Mouse-ear cress).